Here is a 487-residue protein sequence, read N- to C-terminus: ATP-dependent RNA helicase DBP3 (487 aa).

The disordered stretch occupies residues 1-40; that stretch reads MAKRSRNMESNSERSSRPKKKSKGDAKPEQPPYVQSAELD. The short motif at 71 to 98 is the Q motif element; sequence TAFSYLPSDSNQLYGPLEHFSKPTPIQS. The Helicase ATP-binding domain maps to 101-276; it reads WPYLFAGRDV…TTFMKEPVTV (176 aa). 114–121 provides a ligand contact to ATP; the sequence is AETGSGKT. The short motif at 222–225 is the DEAD box element; that stretch reads DEAD. The 166-residue stretch at 291 to 456 folds into the Helicase C-terminal domain; the sequence is RIKQIVEVVK…DIPEALLKFG (166 aa).

It belongs to the DEAD box helicase family. DDX5/DBP2 subfamily.

The protein resides in the nucleus. Its subcellular location is the nucleolus. The catalysed reaction is ATP + H2O = ADP + phosphate + H(+). In terms of biological role, ATP-dependent RNA helicase required for 60S ribosomal subunit synthesis. Involved in efficient pre-rRNA processing, predominantly at site A3, which is necessary for the normal formation of 25S and 5.8S rRNAs. This chain is ATP-dependent RNA helicase DBP3 (DBP3), found in Ajellomyces capsulatus (strain NAm1 / WU24) (Darling's disease fungus).